Here is a 380-residue protein sequence, read N- to C-terminus: MGSSCRIECIFFSEFHPTLGPKITYQVPEDFISRELFDTVQVYIITKPELQNKLITVTAMEKKLIGCPVCIEHKKYSRNALLFNLGFVCDAQAKTCALEPIVKKLAGYLTTLELESSFVSTEESKQKLVPIMTILLEELNASGRCTLPIDESNTIHLKVIEQRPDPPVAQEYDVPVFTKDKEDFFNSQWDLTTQQILPYIDGFRHVQKISAEADVELNLVRIAIQNLLYYGVVTLVSILQYSNVYCPTPKVQDLVDDKSLQEACLSYVTKEGHKRASLRDVFQLYCSLSPGTTVRDLIGRHPQQLQHVDERKLIQFGLMKNLIRRLQKYPVRVSRDERSHPARLYTGCHSYDEICCKTGMSYQELDERLENDPNIIICWK.

Residues 1–133 (MGSSCRIECI…SKQKLVPIMT (133 aa)) form an interaction with PDPK1 region. A GDP-binding site is contributed by Arg-78. At Arg-78 the chain carries Asymmetric dimethylarginine. Glycyl lysine isopeptide (Lys-Gly) (interchain with G-Cter in ubiquitin) cross-links involve residues Lys-158 and Lys-357.

Belongs to the NPR2 family. As to quaternary structure, within the GATOR complex, component of the GATOR1 subcomplex, made of DEPDC5, NPRL2 and NPRL3. GATOR1 mediates the strong interaction of the GATOR complex with small GTPases Rag (RagA/RRAGA, RagB/RRAGB, RagC/RRAGC and/or RagD/RRAGD) heterodimers. GATOR1 interacts with GPR155/LYCHOS; interaction takes place in presence of cholesterol and prevents interaction between GATOR1 and KICSTOR. Interacts with PDPK1. In the presence of abundant amino acids, ubiquitinated at Lys-158 and Lys-357 via 'Lys-6'-linked ubiquitination by the WDR24 component of the GATOR2 complex, thereby inhibiting the GATOR1 complex and promoting mTORC1 activation. Post-translationally, asymmetric dimethylation at Arg-78 by PRMT1 inhibits the GTPase activator activity of the GATOR1 complex and consequently inducing timely mTORC1 activation under methionine-sufficient conditions.

The protein resides in the lysosome membrane. Catalytic component of the GATOR1 complex, a multiprotein complex that functions as an inhibitor of the amino acid-sensing branch of the mTORC1 pathway. In response to amino acid depletion, the GATOR1 complex has GTPase activating protein (GAP) activity and strongly increases GTP hydrolysis by RagA/RRAGA (or RagB/RRAGB) within heterodimeric Rag complexes, thereby turning them into their inactive GDP-bound form, releasing mTORC1 from lysosomal surface and inhibiting mTORC1 signaling. In the presence of abundant amino acids, the GATOR1 complex is ubiquitinated and inhibited by GATOR2. Within the GATOR1 complex, NPRL2 constitutes the catalytic subunit that mediates the GTPase activator activity and under methionine-sufficient conditions, the GTPase activator activity is inhibited by PRMT1 through methylation and consequently inducing timely mTORC1 activation. Functionally, suppresses Src-dependent tyrosine phosphorylation and activation of PDPK1 and its downstream signaling. Down-regulates PDPK1 kinase activity by interfering with tyrosine phosphorylation at 'Tyr-9', 'Tyr-373' and 'Tyr-376' residues. May act as a tumor suppressor. Suppresses cell growth and enhances sensitivity to various anticancer drugs. This chain is GATOR1 complex protein NPRL2, found in Bos taurus (Bovine).